We begin with the raw amino-acid sequence, 205 residues long: Imidazole glycerol phosphate synthase subunit HisH (205 aa).

In terms of domain architecture, Glutamine amidotransferase type-1 spans 1 to 205 (MVGIVNYNIG…RILKNFCEIG (205 aa)). Residue cysteine 79 is the Nucleophile of the active site. Catalysis depends on residues histidine 186 and glutamate 188.

As to quaternary structure, heterodimer of HisH and HisF.

It localises to the cytoplasm. It carries out the reaction 5-[(5-phospho-1-deoxy-D-ribulos-1-ylimino)methylamino]-1-(5-phospho-beta-D-ribosyl)imidazole-4-carboxamide + L-glutamine = D-erythro-1-(imidazol-4-yl)glycerol 3-phosphate + 5-amino-1-(5-phospho-beta-D-ribosyl)imidazole-4-carboxamide + L-glutamate + H(+). The catalysed reaction is L-glutamine + H2O = L-glutamate + NH4(+). Its pathway is amino-acid biosynthesis; L-histidine biosynthesis; L-histidine from 5-phospho-alpha-D-ribose 1-diphosphate: step 5/9. Its function is as follows. IGPS catalyzes the conversion of PRFAR and glutamine to IGP, AICAR and glutamate. The HisH subunit catalyzes the hydrolysis of glutamine to glutamate and ammonia as part of the synthesis of IGP and AICAR. The resulting ammonia molecule is channeled to the active site of HisF. The protein is Imidazole glycerol phosphate synthase subunit HisH of Wolinella succinogenes (strain ATCC 29543 / DSM 1740 / CCUG 13145 / JCM 31913 / LMG 7466 / NCTC 11488 / FDC 602W) (Vibrio succinogenes).